A 236-amino-acid polypeptide reads, in one-letter code: Purine nucleoside phosphorylase DeoD-type (236 aa).

His5 is an a purine D-ribonucleoside binding site. Phosphate contacts are provided by residues Gly21, Arg25, Arg44, and 88-91; that span reads RVGS. Residues 180 to 182 and 204 to 205 each bind a purine D-ribonucleoside; these read EME and SD. Asp205 (proton donor) is an active-site residue.

This sequence belongs to the PNP/UDP phosphorylase family. Homohexamer; trimer of homodimers.

It catalyses the reaction a purine D-ribonucleoside + phosphate = a purine nucleobase + alpha-D-ribose 1-phosphate. It carries out the reaction a purine 2'-deoxy-D-ribonucleoside + phosphate = a purine nucleobase + 2-deoxy-alpha-D-ribose 1-phosphate. Its function is as follows. Catalyzes the reversible phosphorolytic breakdown of the N-glycosidic bond in the beta-(deoxy)ribonucleoside molecules, with the formation of the corresponding free purine bases and pentose-1-phosphate. The chain is Purine nucleoside phosphorylase DeoD-type from Psychromonas ingrahamii (strain DSM 17664 / CCUG 51855 / 37).